Consider the following 299-residue polypeptide: Epimerase family protein SERP0438 (299 aa).

The protein belongs to the NAD(P)-dependent epimerase/dehydratase family. SDR39U1 subfamily.

This is Epimerase family protein SERP0438 from Staphylococcus epidermidis (strain ATCC 35984 / DSM 28319 / BCRC 17069 / CCUG 31568 / BM 3577 / RP62A).